The chain runs to 547 residues: Vacuolar fusion protein MON1 homolog B (547 aa).

M1 is subject to N-acetylmethionine. The segment at 1–106 (MEAGGDTAAP…GGDPSDEEWR (106 aa)) is disordered. Residues 57–66 (PPSPSPPPQS) show a composition bias toward pro residues. 2 positions are modified to phosphoserine: S59 and S61.

This sequence belongs to the MON1/SAND family. Interacts with CCNT2; down-regulates CCNT2-mediated activation of viral promoters during herpes simplex virus 1/HHV-1 infection. Found in a complex with RMC1, CCZ1 MON1A and MON1B.

In Macaca fascicularis (Crab-eating macaque), this protein is Vacuolar fusion protein MON1 homolog B (MON1B).